Consider the following 885-residue polypeptide: MADAHSDGRTGSTTPGKITRPETTGTKNTHSDNASTSAPGNSASASASASASASTSTLHSNSSTTTSSPQRMINHNPSTSSLRNINTGGTRIETGTGRGTGAVQNAALTGAALAFSNAMGKATPVVPNKFAGKTQLGGNGLGGKDGALAAATKVRVGGGGSPNNGGGRTRSPSKVSVTDPGMGGEQQIYGYQKVGRERTGESETDGGSVISGGLEYQGGQRIPQKRNQRPNGHLLPPFSGTSETSPNVKNNSAAFMAANLAAKRSRENSPSHTGQNYGMGMGMGKQASPLPSRRQSYASSIDSTDRRVDLSSIPPTSNLVEMWEQPDKGVKKERGLVSNRGNEIVNRQVQKRPVSSHAPIPVLKPAGLTRPVSSHASESSVQSRIASSQAPISEQVKSKPKPVIHPRPSSSQASVPGPSKPVSKPDVQPPPVSSHTTSSEAPKPSPKPPVQKPAIYNTRPASSHGPVPNLSTKPSIQKLSRPVSSHGPPPAKPSAKPSLQSIRPTSSHTLESTESSSKASVQKPSLPPPRRTPANLSVSGDQSTSLPMHAPQPRSMQSPILTTADRTEPASESPTQSPRSSSTTKTPRRSSKPTLPSRPPVSRQSYNNDADDDESSDDSFVSASSQPKPKSPSFRAKIAEQKRLQTSTYAPSMTAKTLSNAMVAGYLASSRASTPSISPGVIQPPAPPPPRRLKKFFHSEHSRTPTPPQNTLSATGVPTMKTTMRKPKTEKELKEEEGEGEKRRAKKHLVKKHPNKHDEGNRKRWRDEITEKERKRYEALWASNKGLFPYTMDPRGEIIEIEGAADTVPGMVVKDLWERSRLGGDVLEEVWELVHGKGYWGRQKQKRFGRLERDEFVVGLWLIDQRLKGRKLPARVNHSLWASAS.

Disordered regions lie at residues 1–98, 154–246, 262–652, 671–694, and 723–762; these read MADA…GTGR, VRVG…ETSP, AKRS…YAPS, RASTPSISPGVIQPPAPPPPRRLK, and TMRKPKTEKELKEEEGEGEKRRAKKHLVKKHPNKHDEGNR. Residues 9-32 show a composition bias toward polar residues; the sequence is RTGSTTPGKITRPETTGTKNTHSD. Residues 33 to 68 are compositionally biased toward low complexity; it reads NASTSAPGNSASASASASASASTSTLHSNSSTTTSS. The span at 69 to 83 shows a compositional bias: polar residues; sequence PQRMINHNPSTSSLR. Residues 84–95 show a composition bias toward low complexity; that stretch reads NINTGGTRIETG. Over residues 156-168 the composition is skewed to gly residues; the sequence is VGGGGSPNNGGGR. The segment covering 293-302 has biased composition (polar residues); the sequence is RRQSYASSID. The segment covering 325-335 has biased composition (basic and acidic residues); the sequence is QPDKGVKKERG. The segment covering 339–348 has biased composition (polar residues); sequence NRGNEIVNRQ. Low complexity-rich tracts occupy residues 373–383 and 414–425; these read SSHASESSVQS and SVPGPSKPVSKP. Polar residues predominate over residues 469-478; sequence NLSTKPSIQK. A compositionally biased stretch (low complexity) spans 505-517; sequence TSSHTLESTESSS. Polar residues predominate over residues 534–546; it reads ANLSVSGDQSTSL. 2 stretches are compositionally biased toward low complexity: residues 573-585 and 618-633; these read SPTQSPRSSSTTK and DSFVSASSQPKPKSPS. Basic residues predominate over residues 743–755; sequence RRAKKHLVKKHPN. The EH domain occupies 773–879; that stretch reads ERKRYEALWA…RKLPARVNHS (107 aa).

It belongs to the IRS4 family.

In terms of biological role, positive regulator of phosphatidylinositol 4,5-bisphosphate turnover and negatively regulates signaling through the cell integrity pathway. Involved in rDNA silencing. In Botryotinia fuckeliana (strain B05.10) (Noble rot fungus), this protein is Increased rDNA silencing protein 4 (irs4).